Consider the following 198-residue polypeptide: MVITLPKLKYALNALSPHISEETLNFHYNKHHAGYVNKLNTLIKDTPFAEKSLLDIVKESSGAIFNNAAQIWNHTFYWDSMGPDCGGEPHGEIKEKIQEDFGSFNNFKEQFSNILCGHFGSGWGWLALNNNNKLVILQTHDAGNPIKDNTGIPILTCDIWEHAYYIDYRNDRASYVKAWWNLVNWNFANENLKKAMKK.

Residues H27, H74, D158, and H162 each coordinate Fe cation.

Belongs to the iron/manganese superoxide dismutase family. In terms of assembly, homodimer. Fe cation serves as cofactor.

Its subcellular location is the cytoplasm. The enzyme catalyses 2 superoxide + 2 H(+) = H2O2 + O2. Destroys superoxide anion radicals which are normally produced within the cells and which are toxic to biological systems. This is Superoxide dismutase [Fe] (SODB) from Plasmodium falciparum (isolate HB3).